Consider the following 216-residue polypeptide: Imidazole glycerol phosphate synthase subunit HisH (216 aa).

The region spanning 2–216 is the Glutamine amidotransferase type-1 domain; that stretch reads RVAIIDYGSG…LISNFLRWKP (215 aa). The Nucleophile role is filled by cysteine 88. Residues histidine 196 and glutamate 198 contribute to the active site.

Heterodimer of HisH and HisF.

It is found in the cytoplasm. It carries out the reaction 5-[(5-phospho-1-deoxy-D-ribulos-1-ylimino)methylamino]-1-(5-phospho-beta-D-ribosyl)imidazole-4-carboxamide + L-glutamine = D-erythro-1-(imidazol-4-yl)glycerol 3-phosphate + 5-amino-1-(5-phospho-beta-D-ribosyl)imidazole-4-carboxamide + L-glutamate + H(+). It catalyses the reaction L-glutamine + H2O = L-glutamate + NH4(+). It participates in amino-acid biosynthesis; L-histidine biosynthesis; L-histidine from 5-phospho-alpha-D-ribose 1-diphosphate: step 5/9. IGPS catalyzes the conversion of PRFAR and glutamine to IGP, AICAR and glutamate. The HisH subunit catalyzes the hydrolysis of glutamine to glutamate and ammonia as part of the synthesis of IGP and AICAR. The resulting ammonia molecule is channeled to the active site of HisF. The sequence is that of Imidazole glycerol phosphate synthase subunit HisH from Rhizobium meliloti (strain 1021) (Ensifer meliloti).